Reading from the N-terminus, the 285-residue chain is Glycine--tRNA ligase alpha subunit (285 aa).

It belongs to the class-II aminoacyl-tRNA synthetase family. In terms of assembly, tetramer of two alpha and two beta subunits.

It is found in the cytoplasm. The enzyme catalyses tRNA(Gly) + glycine + ATP = glycyl-tRNA(Gly) + AMP + diphosphate. The polypeptide is Glycine--tRNA ligase alpha subunit (Thermodesulfovibrio yellowstonii (strain ATCC 51303 / DSM 11347 / YP87)).